The following is a 281-amino-acid chain: CDAN1-interacting nuclease 1 (281 aa).

Position 114 is a phosphothreonine (Thr-114).

It is found in the nucleus. It localises to the cytoplasm. In terms of biological role, plays a role in erythroid cell differentiation. This Homo sapiens (Human) protein is CDAN1-interacting nuclease 1.